The primary structure comprises 355 residues: MLDRLQAVENRYEKLNELLSDPEVISDTNKLREYSKEQSDIQDTVEVYREYKDVREQLRDAKAMLEDKLDADMRDMVKEEVSELEGQEKTLSERLKILLVPKDPNDDKNVIVEVRGAAGGDEAALFAGDLYRMYSRYAEVQGWKTEIIEASYTELGGYKEIIFMINGKGAFAKLKFENGAHRVQRVPETESGGRIHTSTATVAVLPEAEEVEINIHEKDVRVDTFASSGPGGQSVNTTMSAVRLTHLPTGVVVSCQDEKSQIKNKEKAMKVLRARVYDKFRQEAQAEYDQNRKQAVGTGDRSERIRTYNFPQNRVTDHRIGLTIQKLDQILQGKLDDFINALVMEDQAQKMEAAE.

At Gln-233 the chain carries N5-methylglutamine.

The protein belongs to the prokaryotic/mitochondrial release factor family. Methylated by PrmC. Methylation increases the termination efficiency of RF1.

Its subcellular location is the cytoplasm. Peptide chain release factor 1 directs the termination of translation in response to the peptide chain termination codons UAG and UAA. This chain is Peptide chain release factor 1, found in Bacillus mycoides (strain KBAB4) (Bacillus weihenstephanensis).